The primary structure comprises 130 residues: Small ribosomal subunit protein uS8 (130 aa).

It belongs to the universal ribosomal protein uS8 family. Part of the 30S ribosomal subunit. Contacts proteins S5 and S12.

One of the primary rRNA binding proteins, it binds directly to 16S rRNA central domain where it helps coordinate assembly of the platform of the 30S subunit. This is Small ribosomal subunit protein uS8 from Buchnera aphidicola subsp. Baizongia pistaciae (strain Bp).